The chain runs to 88 residues: Cell division topological specificity factor (88 aa).

It belongs to the MinE family.

In terms of biological role, prevents the cell division inhibition by proteins MinC and MinD at internal division sites while permitting inhibition at polar sites. This ensures cell division at the proper site by restricting the formation of a division septum at the midpoint of the long axis of the cell. The protein is Cell division topological specificity factor of Aromatoleum aromaticum (strain DSM 19018 / LMG 30748 / EbN1) (Azoarcus sp. (strain EbN1)).